Here is a 322-residue protein sequence, read N- to C-terminus: Major serine/threonine-protein phosphatase PP2A-2 catalytic subunit (322 aa).

Mn(2+) is bound by residues Asp-70, His-72, Asp-98, and Asn-130. Residue His-131 is the Proton donor of the active site. Mn(2+) is bound by residues His-180 and His-254. Leu-322 is modified (leucine methyl ester).

It belongs to the PPP phosphatase family. PP-2A subfamily. Mn(2+) is required as a cofactor.

The enzyme catalyses O-phospho-L-seryl-[protein] + H2O = L-seryl-[protein] + phosphate. The catalysed reaction is O-phospho-L-threonyl-[protein] + H2O = L-threonyl-[protein] + phosphate. In terms of biological role, essential role in cell cycle control. PP2A may be involved in controlling the entry into mitosis, possibly acting as an inhibitor. The chain is Major serine/threonine-protein phosphatase PP2A-2 catalytic subunit (ppa2) from Schizosaccharomyces pombe (strain 972 / ATCC 24843) (Fission yeast).